Reading from the N-terminus, the 64-residue chain is Chassatide C7 (64 aa).

Positions 1-35 are cleaved as a propeptide — removed in mature form; the sequence is VLVASLVMLEAQSSDTIQVPDWGKRLLMNHDSNRV. 3 disulfide bridges follow: Cys39–Cys55, Cys43–Cys57, and Cys48–Cys62.

As to expression, expressed in fruit, pedicel, root and stem but not in leaf (at protein level).

Functionally, probably participates in a plant defense mechanism. Active against E.coli ATTC25922 but not against S.aureus ATCC 12600 or S.epidermidis ATCC 14990. Has cytotoxic and hemolytic activity. The sequence is that of Chassatide C7 from Chassalia chartacea (Chassalia curviflora).